We begin with the raw amino-acid sequence, 413 residues long: Serine hydroxymethyltransferase (413 aa).

(6S)-5,6,7,8-tetrahydrofolate-binding positions include Leu-119 and 123–125 (GHL). Lys-228 carries the N6-(pyridoxal phosphate)lysine modification. Glu-243 is a binding site for (6S)-5,6,7,8-tetrahydrofolate.

This sequence belongs to the SHMT family. Homodimer. It depends on pyridoxal 5'-phosphate as a cofactor.

The protein resides in the cytoplasm. The catalysed reaction is (6R)-5,10-methylene-5,6,7,8-tetrahydrofolate + glycine + H2O = (6S)-5,6,7,8-tetrahydrofolate + L-serine. It functions in the pathway one-carbon metabolism; tetrahydrofolate interconversion. Its pathway is amino-acid biosynthesis; glycine biosynthesis; glycine from L-serine: step 1/1. Its function is as follows. Catalyzes the reversible interconversion of serine and glycine with tetrahydrofolate (THF) serving as the one-carbon carrier. This reaction serves as the major source of one-carbon groups required for the biosynthesis of purines, thymidylate, methionine, and other important biomolecules. Also exhibits THF-independent aldolase activity toward beta-hydroxyamino acids, producing glycine and aldehydes, via a retro-aldol mechanism. The chain is Serine hydroxymethyltransferase from Thermoanaerobacter pseudethanolicus (strain ATCC 33223 / 39E) (Clostridium thermohydrosulfuricum).